The primary structure comprises 504 residues: MERSQCGSRDRGVSGRPHLAPGLVVAAPPPPSPALPVPSGMQVPPAFLRPPSLFLRAAAAAAAAAAATSGSGGCPPAPGLESGVGAVGCGYPRTPKCARCRNHGVVSALKGHKRFCRWRDCACAKCTLIAERQRVMAAQVALRRQQAQEESEARGLQRLLCSGLSWPPGGRASGGGGRAENPQSTGGPAAGAALGLGALRQASGSATPAFEVFQQDYPEEKQEQKESKCESCQNGQEELISKSHQLYLGSSSRSNGVIGKQSIGSSISEYSNKPDSILSPHPGEQSGGEESPRSLSSSDLESGNESEWVKDLTATKASLPTVSSRPRDPLDILTKIFPNYRRSRLEGILRFCKGDVVQAIEQVLNGKEHKPDNRNLANSEELENTAFQRASSFSLAGIGFGTLGNKSAFSPLQTTSASYGGDSSLYGVNPRVGISPLRLAYSSAGRGLSGFMSPYLTPGLVPTLPFRPALDYAFSGMIRDSSYLSSKDSITCGRLYFRPNQDNP.

A compositionally biased stretch (basic and acidic residues) spans 1 to 13; the sequence is MERSQCGSRDRGV. The interval 1-27 is disordered; sequence MERSQCGSRDRGVSGRPHLAPGLVVAA. A DNA-binding region (DM) is located at residues 97–144; the sequence is CARCRNHGVVSALKGHKRFCRWRDCACAKCTLIAERQRVMAAQVALRR. Disordered regions lie at residues 170–192 and 266–307; these read GRAS…AAGA and SISE…NESE. Residues 293–306 show a composition bias toward low complexity; sequence RSLSSSDLESGNES. Residues 327–362 enclose the DMA domain; the sequence is RDPLDILTKIFPNYRRSRLEGILRFCKGDVVQAIEQ.

The protein belongs to the DMRT family. Expressed in liver, kidney, pancreas, prostate and weakly detected in testis and ovary.

It is found in the nucleus. The sequence is that of Doublesex- and mab-3-related transcription factor A1 (DMRTA1) from Homo sapiens (Human).